Here is a 295-residue protein sequence, read N- to C-terminus: Phosphatidylserine decarboxylase proenzyme (295 aa).

Catalysis depends on charge relay system; for autoendoproteolytic cleavage activity residues Asp90 and Ser258. Ser258 (schiff-base intermediate with substrate; via pyruvic acid; for decarboxylase activity) is an active-site residue. Ser258 is modified (pyruvic acid (Ser); by autocatalysis).

The protein belongs to the phosphatidylserine decarboxylase family. PSD-B subfamily. Prokaryotic type I sub-subfamily. In terms of assembly, heterodimer of a large membrane-associated beta subunit and a small pyruvoyl-containing alpha subunit. Pyruvate is required as a cofactor. Post-translationally, is synthesized initially as an inactive proenzyme. Formation of the active enzyme involves a self-maturation process in which the active site pyruvoyl group is generated from an internal serine residue via an autocatalytic post-translational modification. Two non-identical subunits are generated from the proenzyme in this reaction, and the pyruvate is formed at the N-terminus of the alpha chain, which is derived from the carboxyl end of the proenzyme. The autoendoproteolytic cleavage occurs by a canonical serine protease mechanism, in which the side chain hydroxyl group of the serine supplies its oxygen atom to form the C-terminus of the beta chain, while the remainder of the serine residue undergoes an oxidative deamination to produce ammonia and the pyruvoyl prosthetic group on the alpha chain. During this reaction, the Ser that is part of the protease active site of the proenzyme becomes the pyruvoyl prosthetic group, which constitutes an essential element of the active site of the mature decarboxylase.

The protein resides in the cell membrane. It catalyses the reaction a 1,2-diacyl-sn-glycero-3-phospho-L-serine + H(+) = a 1,2-diacyl-sn-glycero-3-phosphoethanolamine + CO2. Its pathway is phospholipid metabolism; phosphatidylethanolamine biosynthesis; phosphatidylethanolamine from CDP-diacylglycerol: step 2/2. Its function is as follows. Catalyzes the formation of phosphatidylethanolamine (PtdEtn) from phosphatidylserine (PtdSer). The chain is Phosphatidylserine decarboxylase proenzyme from Blochmanniella pennsylvanica (strain BPEN).